The following is a 763-amino-acid chain: Putative alpha-1,3-mannosyltransferase MNN15 (763 aa).

Topologically, residues 1–7 are cytoplasmic; sequence MRFTLKK. Residues 8 to 28 form a helical membrane-spanning segment; it reads IFFVFLTLLIISIGYLLLQSV. Residues 29 to 763 are Lumenal-facing; the sequence is DLQRIRELLH…KDATTVRLRI (735 aa). 3 N-linked (GlcNAc...) asparagine glycosylation sites follow: Asn71, Asn157, and Asn169. Residues 617–659 are disordered; that stretch reads LVPPDLPNQREPGSPPDTKPEMEFRKSWKSRKKDTDEINEKLP. Basic and acidic residues predominate over residues 649-659; the sequence is KDTDEINEKLP.

Belongs to the MNN1/MNT family.

It is found in the golgi apparatus membrane. It functions in the pathway protein modification; protein glycosylation. In terms of biological role, responsible for addition of the terminal mannose residues to the outer chain of core N-linked polysaccharides and to O-linked mannotriose. Implicated in late Golgi modifications. This chain is Putative alpha-1,3-mannosyltransferase MNN15 (MNN15), found in Candida albicans (strain SC5314 / ATCC MYA-2876) (Yeast).